Here is a 583-residue protein sequence, read N- to C-terminus: Hyaluronan synthase-related protein (583 aa).

Topologically, residues 1-29 are cytoplasmic; sequence MENTTDPENIPVSKPKYPTIRRILSQTFR. Residues 30-50 form a helical membrane-spanning segment; sequence ILLLFSITTAYVLGYQALCHQ. At 51–52 the chain is on the extracellular side; sequence GL. Residues 53–73 traverse the membrane as a helical segment; that stretch reads LITFGLYGAAMLLHLLMQGIF. The Cytoplasmic portion of the chain corresponds to 74–393; that stretch reads ANLEIRRIEK…CNAQWWHQHH (320 aa). Residues 394 to 414 traverse the membrane as a helical segment; sequence IWMTYESATGIFFPFFVTAVL. Topologically, residues 415-425 are extracellular; sequence IRLMYSSSLCN. Residues 426–446 traverse the membrane as a helical segment; the sequence is IVWLFLCIQIMSLLLSLYASW. The Cytoplasmic portion of the chain corresponds to 447 to 457; that stretch reads QSKKLSMVLMS. Residues 458–478 form a helical membrane-spanning segment; it reads LYSTLYIIWLLPCQLVALLTI. The Extracellular portion of the chain corresponds to 479-497; that stretch reads AKSDWGTSGRKKVVNNYVP. Residues 498-518 form a helical membrane-spanning segment; sequence LFSLSIWAAVLLGGLCYSMYI. Topologically, residues 519–535 are cytoplasmic; the sequence is GCRKDWSKPQANRELYH. Residues 536 to 556 form a helical membrane-spanning segment; that stretch reads LLYGCAGYMAYWVLMTVIYCV. The Extracellular segment spans residues 557-583; the sequence is SGSCCKMRSQAVPQTHDITSLSVSLLV.

Belongs to the NodC/HAS family.

The protein localises to the membrane. This is Hyaluronan synthase-related protein (has-rs) from Xenopus laevis (African clawed frog).